The sequence spans 372 residues: GRASP65 homolog protein 1 (372 aa).

Residue methionine 1 is modified to N-acetylmethionine. PDZ GRASP-type domains follow at residues 66-183 (SGLR…WTPL) and 188-276 (FTYH…YGFL). A GRASP region spans residues 66–292 (SGLRIVWVDE…KHCPQQAQQQ (227 aa)). Serine 155 carries the post-translational modification Phosphoserine. The segment at 312–372 (VPSAFTAPPV…PPPQKQSSSD (61 aa)) is disordered.

Homodimer. Interacts with BUG1 (via C-terminus), probably forming a heterooligomer consisting of a GRH1 dimer and a BUG1 dimer. Interacts with COPII coat components SEC23, SEC24, SFB2 and SFB3. In terms of processing, N-terminal acetylation; by N-terminal acetyltransferase NatC.

It is found in the cytoplasm. Its subcellular location is the golgi apparatus. It localises to the cis-Golgi network membrane. Its function is as follows. Involved in the spindle assembly checkpoint. Involved in ER to Golgi vesicle-mediated transport by either facilitating USO1-dependent and -independent tethering or increasing target accuracy of fusion events of COPII-coated vesicles. The protein is GRASP65 homolog protein 1 (GRH1) of Saccharomyces cerevisiae (strain ATCC 204508 / S288c) (Baker's yeast).